The chain runs to 62 residues: Photosystem II reaction center protein Z (62 aa).

The next 2 membrane-spanning stretches (helical) occupy residues 8–28 and 41–61; these read AVFA…VVFA and FSGT…NSLI.

It belongs to the PsbZ family. In terms of assembly, PSII is composed of 1 copy each of membrane proteins PsbA, PsbB, PsbC, PsbD, PsbE, PsbF, PsbH, PsbI, PsbJ, PsbK, PsbL, PsbM, PsbT, PsbY, PsbZ, Psb30/Ycf12, at least 3 peripheral proteins of the oxygen-evolving complex and a large number of cofactors. It forms dimeric complexes.

It is found in the plastid. The protein resides in the chloroplast thylakoid membrane. In terms of biological role, may control the interaction of photosystem II (PSII) cores with the light-harvesting antenna, regulates electron flow through the 2 photosystem reaction centers. PSII is a light-driven water plastoquinone oxidoreductase, using light energy to abstract electrons from H(2)O, generating a proton gradient subsequently used for ATP formation. In Amborella trichopoda, this protein is Photosystem II reaction center protein Z.